We begin with the raw amino-acid sequence, 384 residues long: N-acetylneuraminate epimerase (384 aa).

An N-terminal signal peptide occupies residues 1–29; sequence MGMQMKNFKKMMTLMALCLSVAITTSGYA. Kelch repeat units lie at residues 51 to 95, 97 to 149, 151 to 184, 185 to 230, 233 to 282, 304 to 353, and 355 to 384; these read VIYV…VFLN, ELYV…VKLN, TMVL…KVIY, NYFN…VMEN, LMLI…LAGA, QNYT…SYGD, and VFLI…LLIK. Glu-239 serves as the catalytic Proton acceptor.

Belongs to the NanM family. As to quaternary structure, homodimer.

It localises to the periplasm. The enzyme catalyses N-acetyl-alpha-neuraminate = N-acetyl-beta-neuraminate. In terms of biological role, converts alpha-N-acetylneuranimic acid (Neu5Ac) to the beta-anomer, accelerating the equilibrium between the alpha- and beta-anomers. Probably facilitates sialidase-negative bacteria to compete successfully for limited amounts of extracellular Neu5Ac, which is likely taken up in the beta-anomer. In addition, the rapid removal of sialic acid from solution might be advantageous to the bacterium to damp down host responses. The chain is N-acetylneuraminate epimerase from Salmonella enteritidis PT4 (strain P125109).